The primary structure comprises 429 residues: G2/mitotic-specific cyclin-B1 (429 aa).

Positions 71–114 (TGKVSAKIPPPKPLEKVPPVSEPEVELAETHEPEPVMDEKLSPE) are disordered. K73 is subject to N6-acetyllysine. Positions 98–112 (AETHEPEPVMDEKLS) are enriched in basic and acidic residues. S122 carries the phosphoserine; by CDK1 modification. A Phosphoserine modification is found at S124. S129 bears the Phosphoserine; by PLK1 mark. At S143 the chain carries Phosphoserine. 2 interaction with CDK2 regions span residues 165–173 (EYVKDIYAY) and 254–257 (YEEM). The residue at position 317 (T317) is a Phosphothreonine.

Belongs to the cyclin family. Cyclin AB subfamily. Interacts with the CDC2 protein kinase to form a serine/threonine kinase holoenzyme complex also known as maturation promoting factor (MPF). The cyclin subunit imparts substrate specificity to the complex. Binds HEI10. Interacts with catalytically active RALBP1 and CDC2 during mitosis to form an endocytotic complex during interphase. Interacts with CCNF; interaction is required for nuclear localization. Interacts with CDK5RAP3. Interacts with RFPL4A and UBE2A. Interacts with INCA1. Post-translationally, ubiquitinated by the SCF(NIPA) complex during interphase, leading to its destruction. Not ubiquitinated during G2/M phases. In terms of processing, phosphorylated by PLK1 at Ser-129 on centrosomes during prophase: phosphorylation by PLK1 does not cause nuclear import. Phosphorylation at Ser-143 was also reported to be mediated by PLK1 but Ser-129 seems to be the primary phosphorylation site.

Its subcellular location is the cytoplasm. It is found in the nucleus. It localises to the cytoskeleton. The protein localises to the microtubule organizing center. The protein resides in the centrosome. Essential for the control of the cell cycle at the G2/M (mitosis) transition. The chain is G2/mitotic-specific cyclin-B1 (CCNB1) from Mesocricetus auratus (Golden hamster).